The chain runs to 61 residues: Cytotoxin 1 (61 aa).

4 disulfide bridges follow: Cys3-Cys22, Cys15-Cys39, Cys43-Cys54, and Cys55-Cys60.

The protein belongs to the three-finger toxin family. Short-chain subfamily. Type IB cytotoxin sub-subfamily. In terms of tissue distribution, expressed by the venom gland.

The protein localises to the secreted. Functionally, this protein lyses red blood cells and has cardiotoxic and hypotensive activities. This chain is Cytotoxin 1, found in Hemachatus haemachatus (Rinkhals).